The chain runs to 637 residues: MEYLAGNYDVIVVGAGHAGCEAALAAARMGGRTLLITLSLDNIAHMDCNPSLGGPAKGHLVREIDALGGQMGITADETSLQVRMLNTGKGPAVHALRIQSDKQAYHLHMRNAILGQENLVLHQALVERIKTEDGKVSGVVTRTGAFYAAPNVILTSGTYLRGRIIIGDAMYEGGPNGQQTAMNLSGALKELGLELGRFKTGTPPRIHRRSVDYTKFTVQPGDSVPWRYSFMPTQSMFWGRDVDKQIPCWLGYTTPETHQIIQDNIHRAPLYSGKIEGIGPRYCPSIEDKVVRFADRPTHQIFLEPEGWNSDELYVAGLSTSMPEEIQYDIIHSIPGLEKAELLRPGYAIEYDYVKPYQLSLSLEVRRIPGLFTAGQLNGTSGYEEAAAQGLLAGINAALRVQGKEPFIVRRSEGYLGVLIDDLVNKGVKEPYRLLTSRAEYRLILRQDNADLRLTPRGREVGLVKDERWAAFQKKKAAIAEINALWRGTTFSPLNEHLAEVLAGVHSAPVHGGISGEELMRRPEITINEIKQLIPQLAEYDEEALLEAGIEIKYAGYIEKQLAEIERFAKMEERMIPEEIVYDQIKGLSTEGRQRLKEVAPANMGQATRITGVTPADISVLLVYLEQKRRGGQIHAT.

FAD is bound at residue 14 to 19; it reads GAGHAG. NAD(+) is bound at residue 279–293; it reads GPRYCPSIEDKVVRF.

This sequence belongs to the MnmG family. As to quaternary structure, homodimer. Heterotetramer of two MnmE and two MnmG subunits. FAD is required as a cofactor.

It localises to the cytoplasm. Functionally, NAD-binding protein involved in the addition of a carboxymethylaminomethyl (cmnm) group at the wobble position (U34) of certain tRNAs, forming tRNA-cmnm(5)s(2)U34. The sequence is that of tRNA uridine 5-carboxymethylaminomethyl modification enzyme MnmG from Desulfitobacterium hafniense (strain Y51).